A 225-amino-acid polypeptide reads, in one-letter code: Platelet-activating factor acetylhydrolase IB subunit beta homolog (225 aa).

This sequence belongs to the 'GDSL' lipolytic enzyme family. Platelet-activating factor acetylhydrolase IB beta/gamma subunits subfamily. As to quaternary structure, does not interact with Lis-1.

The polypeptide is Platelet-activating factor acetylhydrolase IB subunit beta homolog (Paf-AHalpha) (Drosophila melanogaster (Fruit fly)).